Reading from the N-terminus, the 61-residue chain is Small ribosomal subunit protein uS14B (61 aa).

4 residues coordinate Zn(2+): Cys24, Cys27, Cys40, and Cys43.

The protein belongs to the universal ribosomal protein uS14 family. Zinc-binding uS14 subfamily. In terms of assembly, part of the 30S ribosomal subunit. Contacts proteins S3 and S10. The cofactor is Zn(2+).

Binds 16S rRNA, required for the assembly of 30S particles and may also be responsible for determining the conformation of the 16S rRNA at the A site. This chain is Small ribosomal subunit protein uS14B, found in Mycobacterium bovis (strain ATCC BAA-935 / AF2122/97).